The chain runs to 545 residues: T-complex protein 1 subunit gamma (545 aa).

Residue Met1 is modified to N-acetylmethionine. Residues 1 to 24 (MMGHRPVLVLSQNTKRESGRKVQS) form a disordered region. Ser11 carries the post-translational modification Phosphoserine. A Glycyl lysine isopeptide (Lys-Gly) (interchain with G-Cter in SUMO2) cross-link involves residue Lys15. ADP is bound by residues Gly42, Gly94, Thr95, Thr96, Ser97, Thr162, and Lys163. The ATP site is built by Gly42, Gly94, Thr95, and Thr96. Ser170 bears the Phosphoserine mark. At Lys222 the chain carries N6-acetyllysine. Phosphoserine occurs at positions 243 and 244. At Tyr247 the chain carries Phosphotyrosine. Residues Lys248 and Lys249 each participate in a glycyl lysine isopeptide (Lys-Gly) (interchain with G-Cter in SUMO2) cross-link. Ser252 bears the Phosphoserine mark. An intrachain disulfide couples Cys366 to Cys372. Lys381 is covalently cross-linked (Glycyl lysine isopeptide (Lys-Gly) (interchain with G-Cter in SUMO2)). An ADP-binding site is contributed by Gly411. ATP is bound at residue Gly411. Thr430 and Thr459 each carry phosphothreonine. Positions 482, 483, 497, and 502 each coordinate ADP. Residue Gly482 coordinates ATP. Glu497 contributes to the ATP binding site. Residues 526-545 (HKKKGDDQSRQGGAPDAGQE) form a disordered region.

This sequence belongs to the TCP-1 chaperonin family. As to quaternary structure, component of the chaperonin-containing T-complex (TRiC), a hexadecamer composed of two identical back-to-back stacked rings enclosing a protein folding chamber. Each ring is made up of eight different subunits: TCP1/CCT1, CCT2, CCT3, CCT4, CCT5, CCT6A/CCT6, CCT7, CCT8. Interacts with PACRG. Interacts with DNAAF4. Interacts with DLEC1.

The protein resides in the cytoplasm. It catalyses the reaction ATP + H2O = ADP + phosphate + H(+). Its function is as follows. Component of the chaperonin-containing T-complex (TRiC), a molecular chaperone complex that assists the folding of actin, tubulin and other proteins upon ATP hydrolysis. The TRiC complex mediates the folding of WRAP53/TCAB1, thereby regulating telomere maintenance. As part of the TRiC complex may play a role in the assembly of BBSome, a complex involved in ciliogenesis regulating transports vesicles to the cilia. In Macaca fascicularis (Crab-eating macaque), this protein is T-complex protein 1 subunit gamma (CCT3).